Consider the following 325-residue polypeptide: Tagatose 1,6-diphosphate aldolase (325 aa).

Belongs to the aldolase LacD family.

The enzyme catalyses D-tagatofuranose 1,6-bisphosphate = D-glyceraldehyde 3-phosphate + dihydroxyacetone phosphate. It participates in carbohydrate metabolism; D-tagatose 6-phosphate degradation; D-glyceraldehyde 3-phosphate and glycerone phosphate from D-tagatose 6-phosphate: step 2/2. The chain is Tagatose 1,6-diphosphate aldolase from Staphylococcus haemolyticus (strain JCSC1435).